The following is a 241-amino-acid chain: Glucosamine-6-phosphate deaminase (241 aa).

Asp67 serves as the catalytic Proton acceptor; for enolization step. Catalysis depends on Asn136, which acts as the For ring-opening step. The active-site Proton acceptor; for ring-opening step is His138. Catalysis depends on Glu143, which acts as the For ring-opening step.

It belongs to the glucosamine/galactosamine-6-phosphate isomerase family. NagB subfamily.

The catalysed reaction is alpha-D-glucosamine 6-phosphate + H2O = beta-D-fructose 6-phosphate + NH4(+). It participates in amino-sugar metabolism; N-acetylneuraminate degradation; D-fructose 6-phosphate from N-acetylneuraminate: step 5/5. Functionally, catalyzes the reversible isomerization-deamination of glucosamine 6-phosphate (GlcN6P) to form fructose 6-phosphate (Fru6P) and ammonium ion. This chain is Glucosamine-6-phosphate deaminase, found in Halothermothrix orenii (strain H 168 / OCM 544 / DSM 9562).